Here is a 226-residue protein sequence, read N- to C-terminus: Large ribosomal subunit protein uL1 (226 aa).

The protein belongs to the universal ribosomal protein uL1 family. In terms of assembly, part of the 50S ribosomal subunit.

Its function is as follows. Binds directly to 23S rRNA. The L1 stalk is quite mobile in the ribosome, and is involved in E site tRNA release. In terms of biological role, protein L1 is also a translational repressor protein, it controls the translation of the L11 operon by binding to its mRNA. The sequence is that of Large ribosomal subunit protein uL1 from Mycoplasma pneumoniae (strain ATCC 29342 / M129 / Subtype 1) (Mycoplasmoides pneumoniae).